A 143-amino-acid polypeptide reads, in one-letter code: Universal stress protein A (143 aa).

The protein belongs to the universal stress protein A family. In terms of assembly, homodimer.

The protein resides in the cytoplasm. Required for resistance to DNA-damaging agents. The polypeptide is Universal stress protein A (uspA) (Photorhabdus laumondii subsp. laumondii (strain DSM 15139 / CIP 105565 / TT01) (Photorhabdus luminescens subsp. laumondii)).